A 99-amino-acid chain; its full sequence is Small ribosomal subunit protein bS20 (99 aa).

A compositionally biased stretch (basic residues) spans 1 to 20; it reads MASAKPKKKNPRLASGRKRV. The disordered stretch occupies residues 1–21; the sequence is MASAKPKKKNPRLASGRKRVR.

This sequence belongs to the bacterial ribosomal protein bS20 family.

Its function is as follows. Binds directly to 16S ribosomal RNA. This is Small ribosomal subunit protein bS20 from Verminephrobacter eiseniae (strain EF01-2).